A 467-amino-acid polypeptide reads, in one-letter code: Protein indeterminate-domain 6, chloroplastic (467 aa).

The transit peptide at 1 to 20 directs the protein to the chloroplast; the sequence is MSSSYNTIALSSTPTFLLSS. Residues 38 to 65 form a disordered region; it reads TMVQQQPTSSVAPPPKKRRNQPGNPNPD. Residues 39 to 48 show a composition bias toward polar residues; that stretch reads MVQQQPTSSV. S72 bears the Phosphoserine mark. 2 consecutive C2H2-type zinc fingers follow at residues 82-104 and 123-153; these read FLCE…RRGH and YLCP…YRKH. Residues 158–181 form a C2H2-type 2; degenerate zinc finger; it reads WKCDKCSKRYAVQSDWKAHSKTCG. Zn(2+)-binding residues include C160, C163, H176, C180, C187, C189, H202, and C206. A CCHC-type 2; atypical zinc finger spans residues 185-208; it reads YRCDCGTIFSRRDSYITHRAFCDA. The segment at 195-207 is SHR-binding; it reads RRDSYITHRAFCD. Residues 440–467 are disordered; sequence NGRGGRSGGPPLDAEMKFSHPNHPYGKA.

The protein resides in the plastid. It localises to the chloroplast. Its function is as follows. Probable transcription factor. This is Protein indeterminate-domain 6, chloroplastic from Arabidopsis thaliana (Mouse-ear cress).